Here is a 204-residue protein sequence, read N- to C-terminus: MNFLNFSMLVFAYLLGSINSAIIVCYIFRLPSPRSVGSGNPGTTNVLRIGGNVPAIITLAFDILKGLVPVVLAKVLTGNEFITACTALYAILGHIFPIFFGFKGGKGVATLIGTLFGFSWILGLIFVVTWLCVAVITRYSSLSALVATVIASFSVIFTSDLQVATPFLIIAIIILVKHKGNIQRLISGQESKIGDKAKAKNDSN.

The next 5 helical transmembrane spans lie at 8-28, 53-73, 81-101, 116-136, and 155-175; these read MLVFAYLLGSINSAIIVCYIF, VPAIITLAFDILKGLVPVVLA, FITACTALYAILGHIFPIFFG, FGFSWILGLIFVVTWLCVAVI, and VIFTSDLQVATPFLIIAIIIL.

It belongs to the PlsY family. Probably interacts with PlsX.

The protein localises to the cell inner membrane. It carries out the reaction an acyl phosphate + sn-glycerol 3-phosphate = a 1-acyl-sn-glycero-3-phosphate + phosphate. It participates in lipid metabolism; phospholipid metabolism. In terms of biological role, catalyzes the transfer of an acyl group from acyl-phosphate (acyl-PO(4)) to glycerol-3-phosphate (G3P) to form lysophosphatidic acid (LPA). This enzyme utilizes acyl-phosphate as fatty acyl donor, but not acyl-CoA or acyl-ACP. This is Glycerol-3-phosphate acyltransferase from Francisella philomiragia subsp. philomiragia (strain ATCC 25017 / CCUG 19701 / FSC 153 / O#319-036).